The following is a 301-amino-acid chain: tRNA pseudouridine synthase B (301 aa).

Catalysis depends on aspartate 47, which acts as the Nucleophile.

It belongs to the pseudouridine synthase TruB family. Type 1 subfamily.

The catalysed reaction is uridine(55) in tRNA = pseudouridine(55) in tRNA. Functionally, responsible for synthesis of pseudouridine from uracil-55 in the psi GC loop of transfer RNAs. The sequence is that of tRNA pseudouridine synthase B from Cereibacter sphaeroides (strain ATCC 17023 / DSM 158 / JCM 6121 / CCUG 31486 / LMG 2827 / NBRC 12203 / NCIMB 8253 / ATH 2.4.1.) (Rhodobacter sphaeroides).